Reading from the N-terminus, the 447-residue chain is Phosphoglucosamine mutase (447 aa).

Serine 88 functions as the Phosphoserine intermediate in the catalytic mechanism. Mg(2+) contacts are provided by serine 88, aspartate 231, aspartate 233, and aspartate 235. A Phosphoserine modification is found at serine 88.

Belongs to the phosphohexose mutase family. Requires Mg(2+) as cofactor. Activated by phosphorylation.

It catalyses the reaction alpha-D-glucosamine 1-phosphate = D-glucosamine 6-phosphate. Functionally, catalyzes the conversion of glucosamine-6-phosphate to glucosamine-1-phosphate. In Methanococcus maripaludis (strain C5 / ATCC BAA-1333), this protein is Phosphoglucosamine mutase.